Reading from the N-terminus, the 145-residue chain is Protein BUD31 homolog 1 (145 aa).

Belongs to the BUD31 (G10) family.

It is found in the nucleus. The sequence is that of Protein BUD31 homolog 1 from Oryza sativa subsp. japonica (Rice).